A 206-amino-acid chain; its full sequence is MTKRQESKYKIDRRMGENIWGRPKSPVNRREYGPGQHGQRRKGKLSDYGVQLRAKQKLKGFYGNISEKQFRGIYKEANRLRGDTSEILIGLLERRLDAVVYRAKFVMTPFAARQFVGHGHILVNGKRVNVPSYRVREGDVIEVREKSKQLAIVLEASQSAERDTPDYIEVDHDKMVAKFVRIPAFSDVPYAAHMEPNLVIEFYSRS.

A compositionally biased stretch (basic and acidic residues) spans 1–16 (MTKRQESKYKIDRRMG). Residues 1–46 (MTKRQESKYKIDRRMGENIWGRPKSPVNRREYGPGQHGQRRKGKLS) are disordered. The region spanning 94–154 (RRLDAVVYRA…EKSKQLAIVL (61 aa)) is the S4 RNA-binding domain.

Belongs to the universal ribosomal protein uS4 family. In terms of assembly, part of the 30S ribosomal subunit. Contacts protein S5. The interaction surface between S4 and S5 is involved in control of translational fidelity.

In terms of biological role, one of the primary rRNA binding proteins, it binds directly to 16S rRNA where it nucleates assembly of the body of the 30S subunit. Functionally, with S5 and S12 plays an important role in translational accuracy. The sequence is that of Small ribosomal subunit protein uS4 from Parvibaculum lavamentivorans (strain DS-1 / DSM 13023 / NCIMB 13966).